The primary structure comprises 455 residues: L-serine dehydratase (455 aa).

Belongs to the iron-sulfur dependent L-serine dehydratase family. Requires [4Fe-4S] cluster as cofactor.

It carries out the reaction L-serine = pyruvate + NH4(+). The protein operates within carbohydrate biosynthesis; gluconeogenesis. This is L-serine dehydratase (sdaA) from Streptomyces coelicolor (strain ATCC BAA-471 / A3(2) / M145).